The chain runs to 326 residues: tRNA N6-adenosine threonylcarbamoyltransferase (326 aa).

Residues H111 and H115 each coordinate Fe cation. Substrate-binding positions include 134 to 138 (TVSGG), D167, G180, D184, and N268. Position 293 (D293) interacts with Fe cation.

It belongs to the KAE1 / TsaD family. Fe(2+) is required as a cofactor.

The protein localises to the cytoplasm. The catalysed reaction is L-threonylcarbamoyladenylate + adenosine(37) in tRNA = N(6)-L-threonylcarbamoyladenosine(37) in tRNA + AMP + H(+). Functionally, required for the formation of a threonylcarbamoyl group on adenosine at position 37 (t(6)A37) in tRNAs that read codons beginning with adenine. Is involved in the transfer of the threonylcarbamoyl moiety of threonylcarbamoyl-AMP (TC-AMP) to the N6 group of A37, together with TsaE and TsaB. TsaD likely plays a direct catalytic role in this reaction. The chain is tRNA N6-adenosine threonylcarbamoyltransferase from Dehalococcoides mccartyi (strain ATCC BAA-2100 / JCM 16839 / KCTC 5957 / BAV1).